Here is a 367-residue protein sequence, read N- to C-terminus: Alanine racemase (367 aa).

Residue K40 is the Proton acceptor; specific for D-alanine of the active site. Position 40 is an N6-(pyridoxal phosphate)lysine (K40). R136 provides a ligand contact to substrate. Catalysis depends on Y263, which acts as the Proton acceptor; specific for L-alanine. Residue M310 coordinates substrate.

The protein belongs to the alanine racemase family. The cofactor is pyridoxal 5'-phosphate.

It carries out the reaction L-alanine = D-alanine. It participates in amino-acid biosynthesis; D-alanine biosynthesis; D-alanine from L-alanine: step 1/1. Functionally, catalyzes the interconversion of L-alanine and D-alanine. May also act on other amino acids. The protein is Alanine racemase (alr) of Streptococcus pneumoniae (strain 70585).